A 511-amino-acid chain; its full sequence is Gap junction alpha-3 protein (511 aa).

Residues 2–15 lie within the membrane without spanning it; the sequence is GDWSFLGRLLENAQ. Topologically, residues 16–19 are cytoplasmic; the sequence is EHST. Residues 20–40 traverse the membrane as a helical segment; that stretch reads VIGKVWLTVLFIFRILVLGAA. Topologically, residues 41–71 are extracellular; that stretch reads AEEVWGDEQSDFTCNTQQPGCENVCYDKAFP. Disulfide bonds link Cys-54–Cys-214, Cys-61–Cys-208, and Cys-65–Cys-203. A helical membrane pass occupies residues 72-92; that stretch reads ISHIRFWVLQIIFVSTPTLIY. Over 93–174 the chain is Cytoplasmic; that stretch reads LGHVLHIVRM…GALLRTYIFN (82 aa). Residues 110–119 show a composition bias toward basic and acidic residues; the sequence is EEELKKRGSV. The segment at 110-143 is disordered; it reads EEELKKRGSVKDNNYPGAATSGGGSGGGNNFKDP. The span at 129–138 shows a compositional bias: gly residues; it reads TSGGGSGGGN. The helical transmembrane segment at 175-195 threads the bilayer; that stretch reads IIFKTLFEVGFIVGQYFLYGF. The Extracellular segment spans residues 196–223; the sequence is ELKPVYQCSRPPCPHTVDCFISRPTEKT. A helical membrane pass occupies residues 224-244; it reads IFIIFMLVVASVSLLLNMLEI. Over 245-511 the chain is Cytoplasmic; it reads YHLGWKKLKQ…SRARSDDLAV (267 aa). The segment at 397-511 is disordered; sequence AEQQGKAPSS…SRARSDDLAV (115 aa). 2 stretches are compositionally biased toward low complexity: residues 403 to 415 and 440 to 456; these read APSSSAGSSTPSS and TTTNSGSSTSLSGASGS.

Belongs to the connexin family. In terms of assembly, a hemichannel or connexon is composed of a hexamer of connexins. A functional gap junction is formed by the apposition of two hemichannels. During early stages of lens development, interacts with the C-terminus of MIP. In terms of tissue distribution, detected in eye lens.

Its subcellular location is the cell membrane. It is found in the cell junction. It localises to the gap junction. Its function is as follows. Structural component of lens fiber gap junctions. Gap junctions are dodecameric channels that connect the cytoplasm of adjoining cells. They are formed by the docking of two hexameric hemichannels, one from each cell membrane. Small molecules and ions diffuse from one cell to a neighboring cell via the central pore. The protein is Gap junction alpha-3 protein (GJA3) of Gallus gallus (Chicken).